The following is a 514-amino-acid chain: Contact site A protein (514 aa).

A signal peptide spans 1-19 (MKFLLVLIILYNILNSAHS). The segment at 20–453 (APTITAVSNG…EATTSTTYTI (434 aa)) is globular. The IPT/TIG 1 domain maps to 21-104 (PTITAVSNGK…TGGNGLFKYT (84 aa)). N-linked (GlcNAc...) asparagine glycans are attached at residues Asn128, Asn137, Asn207, Asn294, and Asn399. Positions 191–283 (PTITSITPLA…NQQPITFTYN (93 aa)) constitute an IPT/TIG 2 domain. Composition is skewed to low complexity over residues 446–475 (TTSTTYTIPDTPTPTDTATPSPTPTETATP) and 483–494 (STPEETEAPSSA). The tract at residues 446–494 (TTSTTYTIPDTPTPTDTATPSPTPTETATPSPTPKPTSTPEETEAPSSA) is disordered. A run of 2 repeats spans residues 462–469 (TATPSPTP) and 472–479 (TATPSPTP). A 2 X 8 AA repeats, Pro-rich region spans residues 462–479 (TATPSPTPTETATPSPTP). Residue Ser492 is the site of GPI-like-anchor amidated serine attachment. A propeptide spans 493–514 (SATTLISPLSLIVIFISFVLLI) (removed in mature form).

In terms of processing, phosphorylated on serine and N-glycosylated with two types of oligosaccharide chains. The GPI-like-anchor contains a phosphoceramide group, rather than a phosphatidyl group.

Its subcellular location is the cell membrane. This cell-surface glycoprotein mediates cell-cell binding via homophilic interaction. In Dictyostelium discoideum (Social amoeba), this protein is Contact site A protein (csaA).